Consider the following 303-residue polypeptide: Taste receptor type 2 member 13 (303 aa).

The Extracellular portion of the chain corresponds to 1–7; that stretch reads MKSALPS. A helical membrane pass occupies residues 8-28; sequence IFTLVIIAEFIIGNLSNGFIV. The Cytoplasmic segment spans residues 29–55; it reads LINCIDWVSKRELSSVDKLLIILAISR. The helical transmembrane segment at 56 to 76 threads the bilayer; it reads IGLIWEILVSWFLALHYLAIF. Residues 77–85 lie on the Extracellular side of the membrane; the sequence is VSGTGLRIM. A helical membrane pass occupies residues 86–106; it reads IFSWIVSNHFNLWLATILSIF. Over 107 to 128 the chain is Cytoplasmic; that stretch reads YLLKIASFSSPAFLYLKWRVNK. The chain crosses the membrane as a helical span at residues 129-149; that stretch reads VILLILLGTLVFLFLNLIQIN. Residues 150 to 184 are Extracellular-facing; that stretch reads MHIKDWLDRYERNTTWNFSMSDFETFSVSVKFTMT. N-linked (GlcNAc...) asparagine glycans are attached at residues N162 and N166. Residues 185-205 form a helical membrane-spanning segment; the sequence is MFSLTPFTVAFISFLLLIFSL. The Cytoplasmic portion of the chain corresponds to 206 to 232; that stretch reads QKHLQKMQLNYKGHRDPKTKVHTNALK. The helical transmembrane segment at 233-253 threads the bilayer; that stretch reads IVISFLLFYASFFLCVLXSWI. The Extracellular segment spans residues 254-261; the sequence is SELYQNTV. A helical membrane pass occupies residues 262–282; it reads IYMLCETIGVFYPSSHSFLLI. The Cytoplasmic portion of the chain corresponds to 283–303; it reads LGNAKLRQAFLLVAAKVWAKR.

Belongs to the G-protein coupled receptor T2R family.

It is found in the membrane. In terms of biological role, receptor that may play a role in the perception of bitterness and is gustducin-linked. May play a role in sensing the chemical composition of the gastrointestinal content. The activity of this receptor may stimulate alpha gustducin, mediate PLC-beta-2 activation and lead to the gating of TRPM5. The sequence is that of Taste receptor type 2 member 13 (TAS2R13) from Gorilla gorilla gorilla (Western lowland gorilla).